Here is a 253-residue protein sequence, read N- to C-terminus: Kojic acid related protein 1 (253 aa).

A run of 3 helical transmembrane segments spans residues 23 to 43, 53 to 73, and 117 to 137; these read PIKFLWSGALFLGVLSIFILI, IFYPPVSVFVHVGLFIVYIVS, and ALFGFTIIIIVLYFVEIIVSV. The interval 174 to 253 is disordered; sequence FPMMSPALPS…PPPPKKAAKV (80 aa). Composition is skewed to polar residues over residues 184–200 and 226–240; these read GGTTQMMPTMSSRSPEF and QQESSETLAPGNQPQ. Residues 242–253 are compositionally biased toward pro residues; the sequence is YFPPPPKKAAKV.

It localises to the membrane. Involved in mycelium growth and repression of conidia formation by affecting the expression of brlA and abaA. Acts as a negative regulation factor for kojic acid production through affecting the expression of kojA, kojR and kojT. This Aspergillus oryzae (strain ATCC 42149 / RIB 40) (Yellow koji mold) protein is Kojic acid related protein 1.